A 245-amino-acid polypeptide reads, in one-letter code: MGQKINPISNRLGIIRGWDSNWCGGDNYGDILYEDSKIRKYLNTRLAKASVSRIVIERTLKLVTVVVCTARPGVIIGKGGQEVDKLKEELKRITSKEVQINIFEIKKPELDAAIVASNIARQLEAKIAYRHVIKVAIAAAMRMGAEGIKVQISGRLNGVEIARSEMYKEGRIPLHTLRANIDYALSEALTKVGLLGVKVWICRGEVYSKQDFVVQFASQRGMNRYEGSGDKSVKRRKRNGIKKNE.

Positions 38-106 (IRKYLNTRLA…EVQINIFEIK (69 aa)) constitute a KH type-2 domain. Residues 225–245 (YEGSGDKSVKRRKRNGIKKNE) form a disordered region. Residues 233–245 (VKRRKRNGIKKNE) are compositionally biased toward basic residues.

This sequence belongs to the universal ribosomal protein uS3 family. Part of the 30S ribosomal subunit. Forms a tight complex with proteins S10 and S14.

Its function is as follows. Binds the lower part of the 30S subunit head. Binds mRNA in the 70S ribosome, positioning it for translation. This chain is Small ribosomal subunit protein uS3, found in Azobacteroides pseudotrichonymphae genomovar. CFP2.